Here is a 908-residue protein sequence, read N- to C-terminus: MQISLVKIRNKFKQRNRGSFRQWVGKLSNGLMIPIAVLPLAGIFLGIGDAISSNSSGIVGVKFFGEFIKQGGNVVFANLPILFAVAIAITFSQDAGVAGFSAFVFWATMNAFMSSLIIPVDANNTASGYNILYWKAVPQSAIASTLGLNSLSTSVFGGIIVGALTAYLYNKFYAIRLPDVIGFFSGTRFVPIICMTIAIPVALLLLMVWPGVSILLNLIGTGLGILGGRGYGANSLIFGYIERALIPFGVHHAFYAPLWYTSAGGSLQEIANQQVWIRAPGSDYVTRVIGWEDFNTPGKWVIPAALANGTSGMMNGATTTGQDSTSALSKYMSKESTNFLSWKELVDGLTRKGNFDELAKNGLLDGSNKIWIGLNQSGILGKKVLLSDGKDYTITFKTFANTTPTFWSHGAHALLPISGTPSAITNGVTVNGTANSKTYNVSQFTVAVPSLNPAQYSQGKFPFMLIGIPAAGLAMILAAPKGRRKEASSIIGSAAFTSFLTGITEPFEFTFLFLAPWLFYGIHAVLAAVSFWLMNLLSANVGQTFSGSFIDFILYGALPDGRGWLANSYLVPIIGIFLALIYFPTFYFLTIRFNLATPGRGGKLITKKEYLAAKAAQKTDQTTNTNFNQTQIEAGMLLRAYGGSENIAELGACITKLRVTVKNPELVNETIIKDLGAAGVMRTTPTFFVAVFGTRAAVYKSAMQDIIQGKVNWTELQKVLDKNDSTVEKPEIKPTPVLKVQDEIVILSPVNGTLKPLTQVPDDTFKNRLVGDGIAILPSDGHFKAPGDVGVKTELAFPTGHAFIFDVDGVKVMLHIGIDTVKINADKKPGEQLEVFDVKTKQGEYTKLKSESVVEVDLKKLKRKYDPITPFIVMQESLDNFKLVPIRQRGEIKVGQPLFKLIYKDKKS.

The 264-residue stretch at 1–264 folds into the PTS EIIC type-1; first part domain; it reads MQISLVKIRN…YAPLWYTSAG (264 aa). The next 5 helical transmembrane spans lie at 31-51, 71-91, 100-120, 155-175, and 189-209; these read LMIP…GDAI, GGNV…AITF, FSAF…IIPV, VFGG…FYAI, and FVPI…LMVW. The segment at 265–450 is unknown; that stretch reads GSLQEIANQQ…VSQFTVAVPS (186 aa). Residues 451–602 enclose the PTS EIIC type-1; second part domain; sequence LNPAQYSQGK…FNLATPGRGG (152 aa). 5 helical membrane passes run 459 to 479, 487 to 507, 509 to 529, 536 to 556, and 571 to 591; these read GKFP…ILAA, ASSI…TEPF, FTFL…LAAV, LLSA…ILYG, and VPII…FLTI. The PTS EIIB type-1 domain occupies 631–713; it reads QIEAGMLLRA…QDIIQGKVNW (83 aa). C653 acts as the Phosphocysteine intermediate; for EIIB activity in catalysis. The PTS EIIA type-1 domain maps to 762-875; that stretch reads DDTFKNRLVG…DPITPFIVMQ (114 aa). H815 (tele-phosphohistidine intermediate; for EIIA activity) is an active-site residue.

The protein resides in the cell membrane. It carries out the reaction N(pros)-phospho-L-histidyl-[protein] + D-glucose(out) = D-glucose 6-phosphate(in) + L-histidyl-[protein]. Its function is as follows. The phosphoenolpyruvate-dependent sugar phosphotransferase system (sugar PTS), a major carbohydrate active transport system, catalyzes the phosphorylation of incoming sugar substrates concomitantly with their translocation across the cell membrane. This system is involved in glucose transport. The polypeptide is PTS system glucose-specific EIICBA component (ptsG) (Mycoplasma genitalium (strain ATCC 33530 / DSM 19775 / NCTC 10195 / G37) (Mycoplasmoides genitalium)).